An 824-amino-acid polypeptide reads, in one-letter code: 4-methylaminobutanoate oxidase (formaldehyde-forming) (824 aa).

Pros-8alpha-FAD histidine is present on His-67.

Belongs to the GcvT family. FAD serves as cofactor.

The catalysed reaction is 4-(methylamino)butanoate + O2 + H2O = 4-aminobutanoate + formaldehyde + H2O2. It functions in the pathway alkaloid degradation; nicotine degradation. Its function is as follows. Catalyzes the oxidative demethylation of 4-methylaminobutanoate produced from the pyrrolidine ring of nicotine. To a much lesser extent, can also use sarcosine as substrate, but is not active against dimethylglycine, methylaminopropionitrile, methylaminopropylamine, and alpha-methylaminobutanoate. In Paenarthrobacter nicotinovorans (Arthrobacter nicotinovorans), this protein is 4-methylaminobutanoate oxidase (formaldehyde-forming) (abo).